The sequence spans 520 residues: uncharacterized protein (520 aa).

Helical transmembrane passes span 38–58 (VVLI…IPGG), 84–104 (IAIY…GIFN), 105–125 (IGIS…ILKV), 138–158 (IITV…VATL), 167–187 (VVSA…LVET), 220–240 (FGWL…AVVL), 271–291 (FLSF…VYTA), 318–338 (IAIG…SVLI), and 355–375 (ASLV…MVYF).

It localises to the cell membrane. This is an uncharacterized protein from Mycoplasma genitalium (strain ATCC 33530 / DSM 19775 / NCTC 10195 / G37) (Mycoplasmoides genitalium).